The chain runs to 218 residues: Uracil-DNA glycosylase (218 aa).

Catalysis depends on aspartate 60, which acts as the Proton acceptor.

The protein belongs to the uracil-DNA glycosylase (UDG) superfamily. UNG family.

It is found in the cytoplasm. It catalyses the reaction Hydrolyzes single-stranded DNA or mismatched double-stranded DNA and polynucleotides, releasing free uracil.. Excises uracil residues from the DNA which can arise as a result of misincorporation of dUMP residues by DNA polymerase or due to deamination of cytosine. This chain is Uracil-DNA glycosylase, found in Francisella philomiragia subsp. philomiragia (strain ATCC 25017 / CCUG 19701 / FSC 153 / O#319-036).